Reading from the N-terminus, the 527-residue chain is Pyruvate kinase 2, cytosolic (527 aa).

Residue R58 participates in substrate binding. K(+) contacts are provided by D60, S62, D92, and T93. 60–63 (DFSW) serves as a coordination point for ATP. K256 is a binding site for substrate. E258 contributes to the Mg(2+) binding site. Positions 281, 282, and 313 each coordinate substrate. N282 is a Mg(2+) binding site.

It belongs to the pyruvate kinase family. Homotetramer. Requires Mg(2+) as cofactor. The cofactor is K(+).

It is found in the cytoplasm. The protein localises to the cytosol. The catalysed reaction is pyruvate + ATP = phosphoenolpyruvate + ADP + H(+). It participates in carbohydrate degradation; glycolysis; pyruvate from D-glyceraldehyde 3-phosphate: step 5/5. Functionally, key regulatory enzyme of the glycolytic pathway that catalyzes the final step of glycolysis, converting ADP and phosphoenolpyruvate (PEP) to ATP and pyruvate by essentially irreversible transphosphorylation. The sequence is that of Pyruvate kinase 2, cytosolic from Oryza sativa subsp. indica (Rice).